Here is a 340-residue protein sequence, read N- to C-terminus: MPIRDQIIQIVRGHDLTEEQAAEAMEEIMTGVATPAQVAALLTALHLKGETDAEIAGMARVMRAKAIPVHFDGPLLDTCGTGGDSAGTFNISTTAAFIAAGAGATVAKHGNRAMSSVCGSADVLEGLGVTIDLDAAGVARCLEQAGIGFMFAQKFHPAMRFVGPVRREIGIRTIFNALGPLSNPAQARHQTLGVADPALAEKMARALYLLGAQHALVVHGHGGLDELTLSGPNLVIEVRAGHKPRRYEVSAGDLGLTPAPREALLGGDVSTNVAIVRAILSGEERGARRDVALLNAAAALVAADYAADLREGLQQARQSLESGAALARLERLITVSSINR.

Residues Gly-80, 83-84 (GD), Thr-88, 90-93 (NIST), 108-116 (KHGNRAMSS), and Ser-120 each bind 5-phospho-alpha-D-ribose 1-diphosphate. Gly-80 contributes to the anthranilate binding site. Position 92 (Ser-92) interacts with Mg(2+). Anthranilate is bound at residue Asn-111. Position 166 (Arg-166) interacts with anthranilate. Mg(2+) is bound by residues Asp-225 and Glu-226.

The protein belongs to the anthranilate phosphoribosyltransferase family. In terms of assembly, homodimer. It depends on Mg(2+) as a cofactor.

The catalysed reaction is N-(5-phospho-beta-D-ribosyl)anthranilate + diphosphate = 5-phospho-alpha-D-ribose 1-diphosphate + anthranilate. Its pathway is amino-acid biosynthesis; L-tryptophan biosynthesis; L-tryptophan from chorismate: step 2/5. In terms of biological role, catalyzes the transfer of the phosphoribosyl group of 5-phosphorylribose-1-pyrophosphate (PRPP) to anthranilate to yield N-(5'-phosphoribosyl)-anthranilate (PRA). The sequence is that of Anthranilate phosphoribosyltransferase from Roseiflexus castenholzii (strain DSM 13941 / HLO8).